Consider the following 372-residue polypeptide: MRSIIADSKRLVVKVGSSLVTNDGRGLDHDAIGRWAAQIAALRNEGKEVVLVSSGAIAEGMQRLGWSRRPREIDELQAAAAVGQMGLAQVYESRFAEHGIRTAQILLTHADLADRERYLNARSTLLTLLRLGVVPIINENDTVVTDEIKFGDNDTLGALVANLIEGDALIILTDQQGLFTADPRKDPGATLVAEASAGAPELEAMAGGAGSSIGRGGMLTKILAAKRAAHSGANTVIASGRERDVLLRLASGEAIGTQLIARTARMAARKQWMADHLQVRGHVVIDAGAVDKLTAGGKSLLPIGVVAVQGVFARGEVIACVNDAGREVARGITNYSSAEAKLIQRKPSGEIEAVLGYMLEPELIHRDNLVLV.

K14 provides a ligand contact to ATP. Substrate contacts are provided by S54, D141, and N153. 173-174 (TD) serves as a coordination point for ATP. Residues 280–358 (RGHVVIDAGA…GEIEAVLGYM (79 aa)) form the PUA domain.

This sequence belongs to the glutamate 5-kinase family.

It is found in the cytoplasm. The catalysed reaction is L-glutamate + ATP = L-glutamyl 5-phosphate + ADP. Its pathway is amino-acid biosynthesis; L-proline biosynthesis; L-glutamate 5-semialdehyde from L-glutamate: step 1/2. Catalyzes the transfer of a phosphate group to glutamate to form L-glutamate 5-phosphate. In Burkholderia thailandensis (strain ATCC 700388 / DSM 13276 / CCUG 48851 / CIP 106301 / E264), this protein is Glutamate 5-kinase.